The following is a 728-amino-acid chain: Magnetosome formation protease MamE (728 aa).

Residues 1–21 (MAMFNGDVEDGGRGDASCGKD) lie on the Cytoplasmic side of the membrane. Residues 22–42 (LKRYLMLMGVVALVVLFGAFI) form a helical membrane-spanning segment. The Lumenal portion of the chain corresponds to 43 to 728 (YRQSSGGLRL…RNGQEFWIVL (686 aa)). Residues His-188, Asp-221, and Ser-297 each act as charge relay system in the active site. The short motif at 375 to 398 (IFAGTRAPHTDGRQNMDCTTCHDL) is the MCR (magnetochrome) 1 element. Positions 392, 395, 396, 438, 441, and 442 each coordinate heme. The MCR 2 motif lies at 421–444 (IPMGAVSPHTDGRQNMNCANCHQM). 2 consecutive PDZ domains span residues 471 to 573 (AINI…LRDG) and 622 to 721 (PAVM…NRNG).

It in the N-terminal section; belongs to the peptidase S1C family. Might interact with MamB via PDZ1. Requires heme as cofactor. In terms of processing, subject to autocatalytic cleavage; cleavage also requires MamO.

Its subcellular location is the magnetosome membrane. Its activity is regulated as follows. Autoproteolysis is stimulated by exogenous substrates or peptides that bind to its PDZ domains; may be stimulated by an environmental cue in vivo. Protease activity is tightly regulated; increasing its activity decreases substrate levels and disturbs biomineralization. Functionally, acts at 2 distinct steps of magnetosome formation; required for correct localization of proteins to the magnetosome while the protease activity is required for maturation of small magnetite crystals into larger, functional ones. The 2 functions are separable by mutation. Probably cleaves at least itself, MamO and MamP; cleavage requires the putative transport domain of MamO. Involved in localization of some proteins (at least MamA, MamC, MamF, MamI and MamJ) to the magnetosome. The chain is Magnetosome formation protease MamE (mamE) from Paramagnetospirillum magneticum (strain ATCC 700264 / AMB-1) (Magnetospirillum magneticum).